Consider the following 456-residue polypeptide: Glycerol-3-phosphate acyltransferase 4 (456 aa).

The signal sequence occupies residues M1 to G37. 2 helical membrane-spanning segments follow: residues I156 to L176 and I180 to L200. N-linked (GlcNAc...) asparagine glycosylation occurs at N247. The short motif at H248–D253 is the HXXXXD motif element. N327, N328, and N362 each carry an N-linked (GlcNAc...) asparagine glycan.

Belongs to the 1-acyl-sn-glycerol-3-phosphate acyltransferase family. As to expression, highly expressed in testis.

The protein localises to the endoplasmic reticulum membrane. It catalyses the reaction sn-glycerol 3-phosphate + an acyl-CoA = a 1-acyl-sn-glycero-3-phosphate + CoA. The enzyme catalyses dodecanoyl-CoA + sn-glycerol 3-phosphate = 1-dodecanoyl-sn-glycerol 3-phosphate + CoA. It carries out the reaction sn-glycerol 3-phosphate + hexadecanoyl-CoA = 1-hexadecanoyl-sn-glycero-3-phosphate + CoA. The catalysed reaction is sn-glycerol 3-phosphate + octadecanoyl-CoA = 1-octadecanoyl-sn-glycero-3-phosphate + CoA. It catalyses the reaction sn-glycerol 3-phosphate + (9Z)-octadecenoyl-CoA = 1-(9Z-octadecenoyl)-sn-glycero-3-phosphate + CoA. The enzyme catalyses (9Z,12Z)-octadecadienoyl-CoA + sn-glycerol 3-phosphate = 1-(9Z,12Z)-octadecadienoyl-sn-glycero-3-phosphate + CoA. It functions in the pathway phospholipid metabolism; CDP-diacylglycerol biosynthesis; CDP-diacylglycerol from sn-glycerol 3-phosphate: step 1/3. In terms of biological role, converts glycerol-3-phosphate to 1-acyl-sn-glycerol-3-phosphate (lysophosphatidic acid or LPA) by incorporating an acyl moiety at the sn-1 position of the glycerol backbone. Active against both saturated and unsaturated long-chain fatty acyl-CoAs. Protects cells against lipotoxicity. In Mus musculus (Mouse), this protein is Glycerol-3-phosphate acyltransferase 4.